Consider the following 254-residue polypeptide: 5'-nucleotidase SurE (254 aa).

4 residues coordinate a divalent metal cation: D8, D9, S38, and N91.

This sequence belongs to the SurE nucleotidase family. A divalent metal cation serves as cofactor.

The protein resides in the cytoplasm. The enzyme catalyses a ribonucleoside 5'-phosphate + H2O = a ribonucleoside + phosphate. Nucleotidase that shows phosphatase activity on nucleoside 5'-monophosphates. This chain is 5'-nucleotidase SurE, found in Anaeromyxobacter sp. (strain K).